The following is an 874-amino-acid chain: Alanine--tRNA ligase (874 aa).

Zn(2+) is bound by residues H563, H567, C665, and H669.

The protein belongs to the class-II aminoacyl-tRNA synthetase family. It depends on Zn(2+) as a cofactor.

Its subcellular location is the cytoplasm. It carries out the reaction tRNA(Ala) + L-alanine + ATP = L-alanyl-tRNA(Ala) + AMP + diphosphate. Catalyzes the attachment of alanine to tRNA(Ala) in a two-step reaction: alanine is first activated by ATP to form Ala-AMP and then transferred to the acceptor end of tRNA(Ala). Also edits incorrectly charged Ser-tRNA(Ala) and Gly-tRNA(Ala) via its editing domain. The sequence is that of Alanine--tRNA ligase from Actinobacillus succinogenes (strain ATCC 55618 / DSM 22257 / CCUG 43843 / 130Z).